The primary structure comprises 263 residues: tRNA pseudouridine synthase A (263 aa).

Aspartate 51 functions as the Nucleophile in the catalytic mechanism. Position 106 (tyrosine 106) interacts with substrate.

The protein belongs to the tRNA pseudouridine synthase TruA family.

It catalyses the reaction uridine(38/39/40) in tRNA = pseudouridine(38/39/40) in tRNA. Its function is as follows. Formation of pseudouridine at positions 38, 39 and 40 in the anticodon stem and loop of transfer RNAs. In Pyrococcus abyssi (strain GE5 / Orsay), this protein is tRNA pseudouridine synthase A.